Consider the following 243-residue polypeptide: Ubiquinone/menaquinone biosynthesis C-methyltransferase UbiE (243 aa).

Residues Thr-69, Asp-90, and 116–117 contribute to the S-adenosyl-L-methionine site; that span reads DA.

The protein belongs to the class I-like SAM-binding methyltransferase superfamily. MenG/UbiE family.

The catalysed reaction is a 2-demethylmenaquinol + S-adenosyl-L-methionine = a menaquinol + S-adenosyl-L-homocysteine + H(+). The enzyme catalyses a 2-methoxy-6-(all-trans-polyprenyl)benzene-1,4-diol + S-adenosyl-L-methionine = a 5-methoxy-2-methyl-3-(all-trans-polyprenyl)benzene-1,4-diol + S-adenosyl-L-homocysteine + H(+). It participates in quinol/quinone metabolism; menaquinone biosynthesis; menaquinol from 1,4-dihydroxy-2-naphthoate: step 2/2. Its pathway is cofactor biosynthesis; ubiquinone biosynthesis. Methyltransferase required for the conversion of demethylmenaquinol (DMKH2) to menaquinol (MKH2) and the conversion of 2-polyprenyl-6-methoxy-1,4-benzoquinol (DDMQH2) to 2-polyprenyl-3-methyl-6-methoxy-1,4-benzoquinol (DMQH2). The sequence is that of Ubiquinone/menaquinone biosynthesis C-methyltransferase UbiE from Cupriavidus necator (strain ATCC 17699 / DSM 428 / KCTC 22496 / NCIMB 10442 / H16 / Stanier 337) (Ralstonia eutropha).